We begin with the raw amino-acid sequence, 229 residues long: Putative N-acetylmannosamine-6-phosphate 2-epimerase (229 aa).

The protein belongs to the NanE family.

The enzyme catalyses an N-acyl-D-glucosamine 6-phosphate = an N-acyl-D-mannosamine 6-phosphate. It functions in the pathway amino-sugar metabolism; N-acetylneuraminate degradation; D-fructose 6-phosphate from N-acetylneuraminate: step 3/5. Its function is as follows. Converts N-acetylmannosamine-6-phosphate (ManNAc-6-P) to N-acetylglucosamine-6-phosphate (GlcNAc-6-P). This chain is Putative N-acetylmannosamine-6-phosphate 2-epimerase, found in Actinobacillus pleuropneumoniae serotype 5b (strain L20).